The sequence spans 268 residues: MSWLKEVIGTEKAVIAMCHLRALPGDPSFDAQLGMNWVIDKAWDDLMALQNGGVDAVMFSNEFSLPYLTKVRPETTAAMARIIGQLMSDIRIPFGVNVLWDPVASFDLAMATGAKFIREIFTGAYASDFGVWDTNVGETIRHQHRIGAGEVKTLFNIVPEAAVYLGNRDICSIAKSTVFNNHPDALCVSGLTAGTRTDSALLKRVKETVPDTVVLANTGVCLENVEEQLSIADGCVTATTFKKDGVFANFVDQARVSQFMEKVHHIRR.

Belongs to the BtpA family.

The protein is Putative sgc region protein SgcQ (sgcQ) of Escherichia coli (strain K12).